The primary structure comprises 135 residues: MESFVAMKVVCILFLFVVAAEAASTKESPAVNPSKGKDRIKFNFPRYVPNHHVFASNLLKLCTEYTPETQARNDGSQATYKPRINDLQVNFKNCTFLCKREFGNVTLNLPVDTPCGPNKQTCADKSKCVGHIPGC.

A signal peptide spans 1 to 22; sequence MESFVAMKVVCILFLFVVAAEA. Residues Asn93 and Asn104 are each glycosylated (N-linked (GlcNAc...) asparagine). The tract at residues 116–135 is CD4-binding; the sequence is GPNKQTCADKSKCVGHIPGC.

Belongs to the salp15 family. In terms of assembly, interacts with host CD4. Interacts with host DC-SIGN (CD209). (Microbial infection) Interacts with Borrelia outer surface protein C (OspC). In terms of tissue distribution, expressed in salivary glands from feeding female ticks. Highly expressed 4 days after start of feeding.

The protein resides in the secreted. Functionally, salivary tick protein that downregulates host immune system by binding to both dendritic cells, and CD4(+) T cells. Specifically binds to the CD4 coreceptor on T cells. This interaction prevents the activation of the Src kinase, Lck, and its downstream substrate Zap-70, and results in deficient activation of PLCgamma1, the repression of calcium fluxes triggered by T-cell antigen receptor (TCR) ligation, and a subsequent reduction in interleukin-2 production. This salivary protein also binds to DC-SIGN (CD209) on dendritic cells (DC) and activates the Raf-1 kinase/MEK signaling pathway that results in down-regulating expression of pro-inflammatory cytokines. Furthermore, it inhibits T cell proliferation induced by DCs. It also inhibits in vitro keratinocyte inflammation induced by Borrelia burgdorferi or by the major outer surface protein (OspC) of Borrelia. In addition, it downregulates chemokines and monocyte chemoattractant protein 1, as well as several antimicrobial peptides such as defensins, cathelicidin, psoriasin, and RNase 7. Apart from its immunomodulatory activities, it is also associated with protection of Borrelia spirochetes from antibody-mediated killing through its binding to OspC. In vivo, tests on different immune disease animal models show promising therapeutic results, e.g., in inhibiting HIV infection, experimental autoimmune encephalomyelitis, transplantation rejection, and asthma. In terms of biological role, (Microbial infection) Protects Borrelia garinii from anti-Borrelia antibody-mediated cytotoxicity in vitro. May facilitate B.garinii transmission in mouse model. (Microbial infection) Protects Borrelia burgdorferi from anti-Borrelia antibody-mediated cytotoxicity in vitro. Its function is as follows. (Microbial infection) Protects Borrelia afzelii from anti-Borrelia antibody-mediated cytotoxicity in vitro. The chain is Salivary protein 15 Iper-1 from Ixodes persulcatus (Taiga tick).